A 76-amino-acid polypeptide reads, in one-letter code: Protein TraJ (76 aa).

It localises to the cytoplasm. Functionally, this protein is essential for positively regulating the expression of transfer genes that are involved in the conjugal transfer of DNA between bacterial cells. The protein is Protein TraJ (traJ) of Escherichia coli.